The chain runs to 132 residues: Small ribosomal subunit protein uS8 (132 aa).

The protein belongs to the universal ribosomal protein uS8 family. In terms of assembly, part of the 30S ribosomal subunit. Contacts proteins S5 and S12.

One of the primary rRNA binding proteins, it binds directly to 16S rRNA central domain where it helps coordinate assembly of the platform of the 30S subunit. The chain is Small ribosomal subunit protein uS8 from Halothermothrix orenii (strain H 168 / OCM 544 / DSM 9562).